We begin with the raw amino-acid sequence, 441 residues long: Probable xylan O-acetyltransferase 10 (441 aa).

Residues Met-1–Ser-19 are Cytoplasmic-facing. The chain crosses the membrane as a helical; Signal-anchor for type II membrane protein span at residues Pro-20–Phe-40. Topologically, residues Lys-41 to Pro-441 are lumenal. Residues Pro-50 to Gly-81 are disordered. Over residues Pro-56 to Gly-73 the composition is skewed to basic residues. Intrachain disulfides connect Cys-97-Cys-148, Cys-119-Cys-184, Cys-128-Cys-422, and Cys-341-Cys-418. Asn-154 carries an N-linked (GlcNAc...) asparagine glycan. The GDS motif signature appears at Gly-171–Ser-173. Ser-173 serves as the catalytic Nucleophile. N-linked (GlcNAc...) asparagine glycans are attached at residues Asn-212, Asn-343, and Asn-381. Asp-417 acts as the Proton donor in catalysis. The DXXH motif signature appears at Asp-417–His-420. The Proton acceptor role is filled by His-420.

It belongs to the PC-esterase family. TBL subfamily. Expressed in roots, leaves and stems.

It is found in the golgi apparatus membrane. Probable xylan acetyltransferase required for 2-O- and 3-O-monoacetylation of xylosyl residues in xylan. Possesses extremely low activity in vitro. In Oryza sativa subsp. japonica (Rice), this protein is Probable xylan O-acetyltransferase 10.